The chain runs to 472 residues: Methanethiol oxidase (472 aa).

Ala-2 is subject to N-acetylalanine. A phosphoserine mark is found at Ser-111, Ser-371, and Ser-467.

It belongs to the selenium-binding protein family. As to quaternary structure, interacts with USP33. In terms of processing, the N-terminus is blocked.

Its subcellular location is the nucleus. It localises to the cytoplasm. It is found in the cytosol. The protein localises to the membrane. The catalysed reaction is methanethiol + O2 + H2O = hydrogen sulfide + formaldehyde + H2O2 + H(+). The protein operates within organosulfur degradation. Its function is as follows. Catalyzes the oxidation of methanethiol, an organosulfur compound known to be produced in substantial amounts by gut bacteria. Selenium-binding protein which may be involved in the sensing of reactive xenobiotics in the cytoplasm. May be involved in intra-Golgi protein transport. This is Methanethiol oxidase (SELENBP1) from Pongo abelii (Sumatran orangutan).